We begin with the raw amino-acid sequence, 409 residues long: 2,3-bisphosphoglycerate-independent phosphoglycerate mutase 1 (409 aa).

A compositionally biased stretch (basic and acidic residues) spans 163 to 173; the sequence is SDADPKVEGKP. Residues 163 to 184 form a disordered region; it reads SDADPKVEGKPPKKIKALDGSP.

The protein belongs to the BPG-independent phosphoglycerate mutase family. A-PGAM subfamily.

It carries out the reaction (2R)-2-phosphoglycerate = (2R)-3-phosphoglycerate. The protein operates within carbohydrate degradation; glycolysis; pyruvate from D-glyceraldehyde 3-phosphate: step 3/5. Functionally, catalyzes the interconversion of 2-phosphoglycerate and 3-phosphoglycerate. The sequence is that of 2,3-bisphosphoglycerate-independent phosphoglycerate mutase 1 (apgM1) from Methanothermobacter thermautotrophicus (strain ATCC 29096 / DSM 1053 / JCM 10044 / NBRC 100330 / Delta H) (Methanobacterium thermoautotrophicum).